The primary structure comprises 216 residues: Small ribosomal subunit protein uS4 (216 aa).

In terms of domain architecture, S4 RNA-binding spans 111–175 (RRLQTQVLRL…SPLVSESHPE (65 aa)). The interval 194-216 (VAEAKQAKEKPPERGGRKRRGRR) is disordered. Basic and acidic residues predominate over residues 198–208 (KQAKEKPPERG).

The protein belongs to the universal ribosomal protein uS4 family. Part of the 30S ribosomal subunit. Contacts protein S5. The interaction surface between S4 and S5 is involved in control of translational fidelity.

Its function is as follows. One of the primary rRNA binding proteins, it binds directly to 16S rRNA where it nucleates assembly of the body of the 30S subunit. Functionally, with S5 and S12 plays an important role in translational accuracy. The sequence is that of Small ribosomal subunit protein uS4 from Methanosarcina barkeri (strain Fusaro / DSM 804).